The sequence spans 82 residues: RNA-binding protein Hfq (82 aa).

In terms of domain architecture, Sm spans 11 to 71; that stretch reads DTFLNHVRKT…ISTIMPGAPI (61 aa).

This sequence belongs to the Hfq family. Homohexamer.

Its function is as follows. RNA chaperone that binds small regulatory RNA (sRNAs) and mRNAs to facilitate mRNA translational regulation in response to envelope stress, environmental stress and changes in metabolite concentrations. Also binds with high specificity to tRNAs. The polypeptide is RNA-binding protein Hfq (Rhodopseudomonas palustris (strain HaA2)).